Reading from the N-terminus, the 134-residue chain is ATP synthase epsilon chain (134 aa).

The protein belongs to the ATPase epsilon chain family. As to quaternary structure, F-type ATPases have 2 components, CF(1) - the catalytic core - and CF(0) - the membrane proton channel. CF(1) has five subunits: alpha(3), beta(3), gamma(1), delta(1), epsilon(1). CF(0) has three main subunits: a, b and c.

It is found in the cell inner membrane. In terms of biological role, produces ATP from ADP in the presence of a proton gradient across the membrane. This chain is ATP synthase epsilon chain, found in Sinorhizobium medicae (strain WSM419) (Ensifer medicae).